The primary structure comprises 124 residues: Small ribosomal subunit protein uS12 (124 aa).

Residues 1–24 (MTTINQLVRKPRQATTYKSASPAL) form a disordered region. Position 89 is a 3-methylthioaspartic acid (Asp-89).

Belongs to the universal ribosomal protein uS12 family. As to quaternary structure, part of the 30S ribosomal subunit. Contacts proteins S8 and S17. May interact with IF1 in the 30S initiation complex.

Its function is as follows. With S4 and S5 plays an important role in translational accuracy. In terms of biological role, interacts with and stabilizes bases of the 16S rRNA that are involved in tRNA selection in the A site and with the mRNA backbone. Located at the interface of the 30S and 50S subunits, it traverses the body of the 30S subunit contacting proteins on the other side and probably holding the rRNA structure together. The combined cluster of proteins S8, S12 and S17 appears to hold together the shoulder and platform of the 30S subunit. The sequence is that of Small ribosomal subunit protein uS12 from Xanthomonas axonopodis pv. citri (strain 306).